The chain runs to 307 residues: Bifunctional protein FolD 3 (307 aa).

NADP(+) is bound by residues 169–171 (GRS), S194, and I235.

Belongs to the tetrahydrofolate dehydrogenase/cyclohydrolase family. As to quaternary structure, homodimer.

It carries out the reaction (6R)-5,10-methylene-5,6,7,8-tetrahydrofolate + NADP(+) = (6R)-5,10-methenyltetrahydrofolate + NADPH. The catalysed reaction is (6R)-5,10-methenyltetrahydrofolate + H2O = (6R)-10-formyltetrahydrofolate + H(+). It participates in one-carbon metabolism; tetrahydrofolate interconversion. Functionally, catalyzes the oxidation of 5,10-methylenetetrahydrofolate to 5,10-methenyltetrahydrofolate and then the hydrolysis of 5,10-methenyltetrahydrofolate to 10-formyltetrahydrofolate. This chain is Bifunctional protein FolD 3, found in Ectopseudomonas mendocina (strain ymp) (Pseudomonas mendocina).